We begin with the raw amino-acid sequence, 346 residues long: UDP-N-acetylenolpyruvoylglucosamine reductase (346 aa).

Positions 23–194 (FDVRARLACR…VSVTFRLPKV (172 aa)) constitute an FAD-binding PCMH-type domain. Arg-170 is a catalytic residue. Catalysis depends on Ser-246, which acts as the Proton donor. Glu-342 is an active-site residue.

It belongs to the MurB family. Requires FAD as cofactor.

It is found in the cytoplasm. It catalyses the reaction UDP-N-acetyl-alpha-D-muramate + NADP(+) = UDP-N-acetyl-3-O-(1-carboxyvinyl)-alpha-D-glucosamine + NADPH + H(+). Its pathway is cell wall biogenesis; peptidoglycan biosynthesis. In terms of biological role, cell wall formation. The polypeptide is UDP-N-acetylenolpyruvoylglucosamine reductase (Paraburkholderia phymatum (strain DSM 17167 / CIP 108236 / LMG 21445 / STM815) (Burkholderia phymatum)).